The following is a 651-amino-acid chain: Coiled-coil domain-containing protein 81 (651 aa).

The interval 194–314 (LSSRESFGKR…PKTSPAPACQ (121 aa)) is disordered. Ser206 carries the phosphoserine modification. Composition is skewed to basic and acidic residues over residues 212 to 222 (RIEHKETENKP) and 232 to 250 (GENR…KEEG). Positions 265–275 (SISPAKVTSGS) are enriched in polar residues. Phosphoserine is present on residues Ser273, Ser275, Ser294, and Ser416. 2 coiled-coil regions span residues 428–465 (SQSL…EELA) and 539–566 (KRNT…EHLA).

The protein localises to the cytoplasm. The protein resides in the cytoskeleton. Its subcellular location is the microtubule organizing center. It localises to the centrosome. The chain is Coiled-coil domain-containing protein 81 (Ccdc81) from Rattus norvegicus (Rat).